The chain runs to 420 residues: Acetyl-CoA acetyltransferase, mitochondrial (420 aa).

The transit peptide at 1 to 26 directs the protein to the mitochondrion; that stretch reads MTSRALYSTRSQLCRHLAHKYLSRSY. The active-site Acyl-thioester intermediate is cysteine 119. CoA is bound by residues tyrosine 212, 251 to 253, and lysine 256; that span reads KVD. K(+) is bound at residue tyrosine 212. Alanine 273, alanine 274, and alanine 276 together coordinate K(+). Serine 277 provides a ligand contact to CoA. Position 374 (valine 374) interacts with K(+). Cysteine 406 functions as the Proton donor/acceptor in the catalytic mechanism.

The protein belongs to the thiolase-like superfamily. Thiolase family. In terms of assembly, homotetramer.

The protein resides in the mitochondrion. It catalyses the reaction 2 acetyl-CoA = acetoacetyl-CoA + CoA. The enzyme catalyses propanoyl-CoA + acetyl-CoA = 2-methyl-3-oxobutanoyl-CoA + CoA. It participates in lipid metabolism; fatty acid beta-oxidation. This is one of the enzymes that catalyzes the last step of the mitochondrial beta-oxidation pathway, an aerobic process breaking down fatty acids into acetyl-CoA. Using free coenzyme A/CoA, catalyzes the thiolytic cleavage of medium- to long-chain 3-oxoacyl-CoAs into acetyl-CoA and a fatty acyl-CoA shortened by two carbon atoms. The activity of the enzyme is reversible and it can also catalyze the condensation of two acetyl-CoA molecules into acetoacetyl-CoA. Thereby, it plays a major role in ketone body metabolism. The polypeptide is Acetyl-CoA acetyltransferase, mitochondrial (acat1) (Danio rerio (Zebrafish)).